We begin with the raw amino-acid sequence, 356 residues long: Heparan sulfate 2-O-sulfotransferase 1 (356 aa).

Over 1 to 11 (MGLLRIMMPPK) the chain is Cytoplasmic. Residues 12 to 28 (LQLLAVVAFAVAMLFLE) traverse the membrane as a helical; Signal-anchor for type II membrane protein segment. Residues 24-51 (MLFLENQIQKLEESRAKLERAIARHEVR) are a coiled coil. The Lumenal segment spans residues 29–356 (NQIQKLEESR…FYEKIYPKSN (328 aa)). Lys-83, Thr-84, Ala-85, Ser-86, Thr-87, and Ser-88 together coordinate adenosine 3',5'-bisphosphate. N-linked (GlcNAc...) asparagine glycans are attached at residues Asn-108 and Asn-127. Residues His-140 and His-142 contribute to the active site. Arg-164 and Ser-172 together coordinate adenosine 3',5'-bisphosphate. Disulfide bonds link Cys-201/Cys-209 and Cys-222/Cys-228. Adenosine 3',5'-bisphosphate contacts are provided by Tyr-279, Ser-285, Thr-290, and Lys-293.

It belongs to the sulfotransferase 3 family. In terms of assembly, homotrimer. Interacts with the C5-epimerase GLCE. N-glycosylated.

The protein localises to the golgi apparatus membrane. Its function is as follows. Catalyzes the transfer of a sulfo group from 3'-phospho-5'-adenylyl sulfate (PAPS) to the 2-OH position of iduronic acid (IdoA) or glucuronic acid (GlcA) within the heparan sulfate (HS) chain and participates in HS biosynthesis. Required for metanephric development of kidney formation, suggesting that 2-O-sulfation within HS is essential for signaling between ureteric bud and metanephric mesenchyme. This chain is Heparan sulfate 2-O-sulfotransferase 1, found in Cricetulus griseus (Chinese hamster).